The chain runs to 388 residues: Phosphopentomutase (388 aa).

Residues aspartate 9, aspartate 283, histidine 288, aspartate 324, histidine 325, and histidine 336 each contribute to the Mn(2+) site.

This sequence belongs to the phosphopentomutase family. It depends on Mn(2+) as a cofactor.

Its subcellular location is the cytoplasm. The catalysed reaction is 2-deoxy-alpha-D-ribose 1-phosphate = 2-deoxy-D-ribose 5-phosphate. The enzyme catalyses alpha-D-ribose 1-phosphate = D-ribose 5-phosphate. The protein operates within carbohydrate degradation; 2-deoxy-D-ribose 1-phosphate degradation; D-glyceraldehyde 3-phosphate and acetaldehyde from 2-deoxy-alpha-D-ribose 1-phosphate: step 1/2. Its function is as follows. Isomerase that catalyzes the conversion of deoxy-ribose 1-phosphate (dRib-1-P) and ribose 1-phosphate (Rib-1-P) to deoxy-ribose 5-phosphate (dRib-5-P) and ribose 5-phosphate (Rib-5-P), respectively. This Deinococcus radiodurans (strain ATCC 13939 / DSM 20539 / JCM 16871 / CCUG 27074 / LMG 4051 / NBRC 15346 / NCIMB 9279 / VKM B-1422 / R1) protein is Phosphopentomutase.